We begin with the raw amino-acid sequence, 418 residues long: Gamma-glutamyl phosphate reductase (418 aa).

It belongs to the gamma-glutamyl phosphate reductase family.

It is found in the cytoplasm. It catalyses the reaction L-glutamate 5-semialdehyde + phosphate + NADP(+) = L-glutamyl 5-phosphate + NADPH + H(+). The protein operates within amino-acid biosynthesis; L-proline biosynthesis; L-glutamate 5-semialdehyde from L-glutamate: step 2/2. Catalyzes the NADPH-dependent reduction of L-glutamate 5-phosphate into L-glutamate 5-semialdehyde and phosphate. The product spontaneously undergoes cyclization to form 1-pyrroline-5-carboxylate. The protein is Gamma-glutamyl phosphate reductase of Syntrophotalea carbinolica (strain DSM 2380 / NBRC 103641 / GraBd1) (Pelobacter carbinolicus).